We begin with the raw amino-acid sequence, 189 residues long: Interferon alpha-5 (189 aa).

The first 21 residues, 1 to 21, serve as a signal peptide directing secretion; that stretch reads MALPFVLLMALVVLNCKSICS. 2 disulfide bridges follow: Cys24-Cys122 and Cys52-Cys162.

It belongs to the alpha/beta interferon family.

The protein localises to the secreted. In terms of biological role, produced by macrophages, IFN-alpha have antiviral activities. Interferon stimulates the production of two enzymes: a protein kinase and an oligoadenylate synthetase. The sequence is that of Interferon alpha-5 (IFNA5) from Homo sapiens (Human).